The chain runs to 129 residues: UPF0047 protein Mb2586c (129 aa).

Belongs to the UPF0047 family.

The polypeptide is UPF0047 protein Mb2586c (Mycobacterium bovis (strain ATCC BAA-935 / AF2122/97)).